Reading from the N-terminus, the 447-residue chain is Asparagine--tRNA ligase (447 aa).

It belongs to the class-II aminoacyl-tRNA synthetase family. In terms of assembly, homodimer.

It localises to the cytoplasm. It carries out the reaction tRNA(Asn) + L-asparagine + ATP = L-asparaginyl-tRNA(Asn) + AMP + diphosphate + H(+). This chain is Asparagine--tRNA ligase, found in Mycoplasma mobile (strain ATCC 43663 / 163K / NCTC 11711) (Mesomycoplasma mobile).